A 219-amino-acid polypeptide reads, in one-letter code: Interleukin-6 (219 aa).

The N-terminal stretch at 1-20 is a signal peptide; sequence MNSSTRYLSLLSALVVLVKG. A disulfide bridge connects residues C103 and C111.

The protein belongs to the IL-6 superfamily. As to quaternary structure, component of a hexamer of two molecules each of IL6, IL6R and IL6ST; first binds to IL6R to associate with the signaling subunit IL6ST. As to expression, expressed in spleen, gill and gastrointestinal tract, ovary and brain. Highest expression in ovary.

It localises to the secreted. In terms of biological role, cytokine with a wide variety of biological functions in immunity, tissue regeneration, and metabolism. Binds to IL6R, then the complex associates to the signaling subunit IL6ST/gp130 to trigger the intracellular IL6-signaling pathway. The interaction with the membrane-bound IL6R and IL6ST stimulates 'classic signaling', whereas the binding of IL6 and soluble IL6R to IL6ST stimulates 'trans-signaling'. Alternatively, 'cluster signaling' occurs when membrane-bound IL6:IL6R complexes on transmitter cells activate IL6ST receptors on neighboring receiver cells. This Oncorhynchus mykiss (Rainbow trout) protein is Interleukin-6 (il6).